We begin with the raw amino-acid sequence, 320 residues long: Ferrochelatase (320 aa).

The Fe cation site is built by histidine 194 and glutamate 275.

It belongs to the ferrochelatase family. In terms of assembly, monomer.

It is found in the cytoplasm. The enzyme catalyses heme b + 2 H(+) = protoporphyrin IX + Fe(2+). The protein operates within porphyrin-containing compound metabolism; protoheme biosynthesis; protoheme from protoporphyrin-IX: step 1/1. Functionally, catalyzes the ferrous insertion into protoporphyrin IX. This Salmonella schwarzengrund (strain CVM19633) protein is Ferrochelatase.